The primary structure comprises 253 residues: MGGSESTGRKVSFGMDEEERVRVLRGVRLSDEVVTRMKDQSTWAASGAASGSATVPSKVGSSASHPAAASKDGAHKPTAAGVGHQYAEEDLYRRYEREQTLIQEELARLAKREKDAAHQRLSTSILREKKMADQERRKAEHLPADLDEWAKDLEHKEAELQNLNTFYREQLSSIEKKNLEIYRLTEEQFHTAATNAELRVKQRSYDPVCMDLQSNILKCYAENKQERLNCSDLAKEYQKCVSAAQKNLLFNHG.

Residue Gly2 is the site of N-myristoyl glycine attachment. The segment at 38–82 (KDQSTWAASGAASGSATVPSKVGSSASHPAAASKDGAHKPTAAGV) is disordered. Residues 44 to 53 (AASGAASGSA) show a composition bias toward low complexity. Positions 87–116 (AEEDLYRRYEREQTLIQEELARLAKREKDA) form a coiled coil. In terms of domain architecture, CHCH spans 206-248 (DPVCMDLQSNILKCYAENKQERLNCSDLAKEYQKCVSAAQKNL). Short sequence motifs (cx9C motif) lie at residues 209 to 219 (CMDLQSNILKC) and 230 to 240 (CSDLAKEYQKC). Disulfide bonds link Cys209–Cys240 and Cys219–Cys230.

It belongs to the MICOS complex subunit Mic19 family. Metazoan Mic25 subfamily. In terms of assembly, component of the mitochondrial contact site and cristae organizing system (MICOS) complex (also known as MINOS or MitOS complex).

The protein localises to the mitochondrion inner membrane. In terms of biological role, component of the MICOS complex, a large protein complex of the mitochondrial inner membrane that plays crucial roles in the maintenance of crista junctions, inner membrane architecture, and formation of contact sites to the outer membrane. In Xenopus laevis (African clawed frog), this protein is MICOS complex subunit mic25-b (chchd6-b).